Consider the following 142-residue polypeptide: Nucleoside diphosphate kinase (142 aa).

Residues lysine 10, phenylalanine 58, arginine 86, threonine 92, arginine 103, and asparagine 113 each contribute to the ATP site. The Pros-phosphohistidine intermediate role is filled by histidine 116.

Belongs to the NDK family. In terms of assembly, homotetramer. The cofactor is Mg(2+).

It localises to the cytoplasm. It catalyses the reaction a 2'-deoxyribonucleoside 5'-diphosphate + ATP = a 2'-deoxyribonucleoside 5'-triphosphate + ADP. It carries out the reaction a ribonucleoside 5'-diphosphate + ATP = a ribonucleoside 5'-triphosphate + ADP. In terms of biological role, major role in the synthesis of nucleoside triphosphates other than ATP. The ATP gamma phosphate is transferred to the NDP beta phosphate via a ping-pong mechanism, using a phosphorylated active-site intermediate. This Ehrlichia chaffeensis (strain ATCC CRL-10679 / Arkansas) protein is Nucleoside diphosphate kinase.